We begin with the raw amino-acid sequence, 620 residues long: Zinc finger protein GLIS1 (620 aa).

The interval 108–132 (PLTGDLGGPSKRARPGPASTDSHEG) is disordered. Residues 195-220 (QACRWVDCCAAYEQQEELVRHIEKSH) form a C2H2-type 1 zinc finger. The C2H2-type 2; atypical zinc-finger motif lies at 229 to 256 (FTCFWAGCVRRYKPFNARYKLLIHMRVH). 3 consecutive C2H2-type zinc fingers follow at residues 262–286 (NKCMFEGCSKAFSRLENLKIHLRSH), 292–316 (YLCQHPGCQKAFSNSSDRAKHQRTH), and 322–346 (YACQIPGCSKRYTDPSSLRKHVKAH). The short motif at 340-356 (RKHVKAHSAKEQQVRKK) is the Bipartite nuclear localization signal element. Residues 414 to 515 (ASGLLPPAHD…PPLPSPQGYQ (102 aa)) form a disordered region. Residues 477-488 (SSQSHSPGGQPF) are compositionally biased toward low complexity. Over residues 489–510 (PTLPSKPSYPPFQSPPPPPLPS) the composition is skewed to pro residues.

Belongs to the GLI C2H2-type zinc-finger protein family. In terms of assembly, interacts with KLF4. Interacts with POU5F1 and/or POU5F1B. Interacts with SOX2.

It is found in the nucleus. Acts both as a repressor and an activator of transcription. Binds to the consensus sequence 5'-GACCACCCAC-3'. By controlling the expression of genes involved in cell differentiation inhibits the lineage commitment of multipotent cells. Prevents, for instance, the differentiation of multipotent mesenchymal cells into adipocyte and osteoblast. This is Zinc finger protein GLIS1 from Homo sapiens (Human).